Here is a 229-residue protein sequence, read N- to C-terminus: Cytochrome b translational activator protein CBS1, mitochondrial (229 aa).

The transit peptide at 1-25 (MLRTKVFATTVARISGIRRYIPIRT) directs the protein to the mitochondrion.

It is found in the mitochondrion inner membrane. MRNA-specific translational activator of cytochrome b. The cytochrome b (COB) leader RNA may represent the target sequence for CBS1 and CBS2, tethering the COB mRNA to the inner mitochondrial membrane, where cotranslational insertion of cytochrome b into the membrane can occur. This is Cytochrome b translational activator protein CBS1, mitochondrial (CBS1) from Saccharomyces cerevisiae (strain ATCC 204508 / S288c) (Baker's yeast).